A 195-amino-acid polypeptide reads, in one-letter code: Imidazoleglycerol-phosphate dehydratase (195 aa).

It belongs to the imidazoleglycerol-phosphate dehydratase family.

It localises to the cytoplasm. It catalyses the reaction D-erythro-1-(imidazol-4-yl)glycerol 3-phosphate = 3-(imidazol-4-yl)-2-oxopropyl phosphate + H2O. It functions in the pathway amino-acid biosynthesis; L-histidine biosynthesis; L-histidine from 5-phospho-alpha-D-ribose 1-diphosphate: step 6/9. This Burkholderia multivorans (strain ATCC 17616 / 249) protein is Imidazoleglycerol-phosphate dehydratase.